Here is a 172-residue protein sequence, read N- to C-terminus: Trypsin inhibitor 1B (172 aa).

2 disulfide bridges follow: Cys-40-Cys-84 and Cys-133-Cys-139.

The protein belongs to the protease inhibitor I3 (leguminous Kunitz-type inhibitor) family.

In terms of biological role, WTI-1B inhibits trypsin stoichiometrically. In Psophocarpus tetragonolobus (Winged bean), this protein is Trypsin inhibitor 1B.